Here is a 477-residue protein sequence, read N- to C-terminus: UTP--glucose-1-phosphate uridylyltransferase (477 aa).

At A2 the chain carries N-acetylalanine. UTP is bound by residues 92-95 (LNGG), K106, Q169, and G198. 94–95 (GG) contacts substrate. Residues H199 and 227–229 (NSD) contribute to the substrate site. The UTP site is built by D229 and K367.

It belongs to the UDPGP type 1 family. Monomer. Requires Mg(2+) as cofactor.

It is found in the cytoplasm. The enzyme catalyses alpha-D-glucose 1-phosphate + UTP + H(+) = UDP-alpha-D-glucose + diphosphate. With respect to regulation, inhibition by uncomplexed, free UTP. Its function is as follows. Plays a central role as a glucosyl donor in cellular metabolic pathways. In Solanum tuberosum (Potato), this protein is UTP--glucose-1-phosphate uridylyltransferase.